The chain runs to 220 residues: ATP synthase subunit delta (220 aa).

Belongs to the ATPase delta chain family. As to quaternary structure, F-type ATPases have 2 components, F(1) - the catalytic core - and F(0) - the membrane proton channel. F(1) has five subunits: alpha(3), beta(3), gamma(1), delta(1), epsilon(1). F(0) has three main subunits: a(1), b(2) and c(10-14). The alpha and beta chains form an alternating ring which encloses part of the gamma chain. F(1) is attached to F(0) by a central stalk formed by the gamma and epsilon chains, while a peripheral stalk is formed by the delta and b chains.

Its subcellular location is the cell inner membrane. Functionally, f(1)F(0) ATP synthase produces ATP from ADP in the presence of a proton or sodium gradient. F-type ATPases consist of two structural domains, F(1) containing the extramembraneous catalytic core and F(0) containing the membrane proton channel, linked together by a central stalk and a peripheral stalk. During catalysis, ATP synthesis in the catalytic domain of F(1) is coupled via a rotary mechanism of the central stalk subunits to proton translocation. In terms of biological role, this protein is part of the stalk that links CF(0) to CF(1). It either transmits conformational changes from CF(0) to CF(1) or is implicated in proton conduction. This is ATP synthase subunit delta from Gluconobacter oxydans (strain 621H) (Gluconobacter suboxydans).